A 174-amino-acid polypeptide reads, in one-letter code: MATEATGAVEAAPGMPQLDFSTFPNQIFWLIITLVAIYLILTKVALPRIGSVLAERSGTITNDLAAAEELKLAAVEAEKAYNQALADARAEAQKIVAEARAEIQADLDVATAKADAEIAAKSAEAEKAIAEIREGAMASVTEVATDTAQALVAALLPSAKDADVSAAVAERVKG.

Residues 27 to 47 (IFWLIITLVAIYLILTKVALP) form a helical membrane-spanning segment.

The protein belongs to the ATPase B chain family. In terms of assembly, F-type ATPases have 2 components, F(1) - the catalytic core - and F(0) - the membrane proton channel. F(1) has five subunits: alpha(3), beta(3), gamma(1), delta(1), epsilon(1). F(0) has three main subunits: a(1), b(2) and c(10-14). The alpha and beta chains form an alternating ring which encloses part of the gamma chain. F(1) is attached to F(0) by a central stalk formed by the gamma and epsilon chains, while a peripheral stalk is formed by the delta and b chains.

The protein localises to the cell inner membrane. F(1)F(0) ATP synthase produces ATP from ADP in the presence of a proton or sodium gradient. F-type ATPases consist of two structural domains, F(1) containing the extramembraneous catalytic core and F(0) containing the membrane proton channel, linked together by a central stalk and a peripheral stalk. During catalysis, ATP synthesis in the catalytic domain of F(1) is coupled via a rotary mechanism of the central stalk subunits to proton translocation. Functionally, component of the F(0) channel, it forms part of the peripheral stalk, linking F(1) to F(0). The b'-subunit is a diverged and duplicated form of b found in plants and photosynthetic bacteria. This chain is ATP synthase subunit b 2 (atpF2), found in Dinoroseobacter shibae (strain DSM 16493 / NCIMB 14021 / DFL 12).